Reading from the N-terminus, the 236-residue chain is Proteasome subunit alpha (236 aa).

This sequence belongs to the peptidase T1A family. The 20S proteasome core is composed of 14 alpha and 14 beta subunits that assemble into four stacked heptameric rings, resulting in a barrel-shaped structure. The two inner rings, each composed of seven catalytic beta subunits, are sandwiched by two outer rings, each composed of seven alpha subunits. The catalytic chamber with the active sites is on the inside of the barrel. Has a gated structure, the ends of the cylinder being occluded by the N-termini of the alpha-subunits. Is capped by the proteasome-associated ATPase, ARC.

The protein resides in the cytoplasm. Its pathway is protein degradation; proteasomal Pup-dependent pathway. With respect to regulation, the formation of the proteasomal ATPase ARC-20S proteasome complex, likely via the docking of the C-termini of ARC into the intersubunit pockets in the alpha-rings, may trigger opening of the gate for substrate entry. Interconversion between the open-gate and close-gate conformations leads to a dynamic regulation of the 20S proteasome proteolysis activity. Its function is as follows. Component of the proteasome core, a large protease complex with broad specificity involved in protein degradation. The polypeptide is Proteasome subunit alpha (Jonesia denitrificans (strain ATCC 14870 / DSM 20603 / BCRC 15368 / CIP 55.134 / JCM 11481 / NBRC 15587 / NCTC 10816 / Prevot 55134) (Listeria denitrificans)).